The following is a 553-amino-acid chain: Cysteine desulfurase IscS (553 aa).

The span at 102-122 shows a compositional bias: low complexity; the sequence is NNISSNNTQYNNNSSNSGSLN. Positions 102-125 are disordered; sequence NNISSNNTQYNNNSSNSGSLNDEG.

Belongs to the class-V pyridoxal-phosphate-dependent aminotransferase family. NifS/IscS subfamily. Homotetramer. Interacts with Isd11; the interaction enhances cysteine desulfurase activity of IscS. Interacts with IscU. Component of a complex, at least composed of IscS, Isd11 and IscU. Pyridoxal 5'-phosphate serves as cofactor.

Its subcellular location is the mitochondrion. The catalysed reaction is (sulfur carrier)-H + L-cysteine = (sulfur carrier)-SH + L-alanine. It participates in cofactor biosynthesis; iron-sulfur cluster biosynthesis. Functionally, catalyzes sulfur activation and mobilization in iron-sulfur cluster formation (ISC) pathway for iron-sulfur (Fe-S) cluster biogenesis. Active when in complex with a partner protein Isd11. The sequence is that of Cysteine desulfurase IscS from Plasmodium falciparum (isolate 3D7).